We begin with the raw amino-acid sequence, 550 residues long: Gamma-aminobutyric acid receptor subunit beta (550 aa).

Positions 1–24 (MRRSKTRRIFHVSITLLLVSTIFC) are cleaved as a signal peptide. Residues 25–264 (QNGTKPHNNS…FQLRRSVGYF (240 aa)) are Extracellular-facing. Residues Asn-26, Asn-32, Asn-33, Asn-45, Asn-53, and Asn-193 are each glycosylated (N-linked (GlcNAc...) asparagine). Residues Cys-180 and Cys-194 are joined by a disulfide bond. 3 consecutive transmembrane segments (helical) span residues 265 to 285 (IFQTYLPCVLIVMLSWVSFWI), 292 to 311 (ARVALGITTVLTMTTISTGV), and 324 to 344 (IDIYLVMCFVFVFAALLEYAA). Residues 345–527 (VNYSYWGRER…DVNLIDKYSR (183 aa)) are Cytoplasmic-facing. Residues 405-465 (AMSTSNTAAQ…TTSLKGARPH (61 aa)) form a disordered region. Polar residues predominate over residues 406–421 (MSTSNTAAQNNNFEST). A helical membrane pass occupies residues 528 to 548 (VVFPVCFIVFNLFYWSYYMMV).

The protein belongs to the ligand-gated ion channel (TC 1.A.9) family. Gamma-aminobutyric acid receptor (TC 1.A.9.5) subfamily.

The protein resides in the postsynaptic cell membrane. It is found in the cell membrane. Its function is as follows. GABA, an inhibitory neurotransmitter, mediates neuronal inhibition by binding to the GABA receptor and opening an integral chloride channel. This chain is Gamma-aminobutyric acid receptor subunit beta (gab-1), found in Caenorhabditis elegans.